The chain runs to 262 residues: Hydroxyethylthiazole kinase (262 aa).

M50 is a binding site for substrate. 2 residues coordinate ATP: R125 and T171. Position 198 (G198) interacts with substrate.

It belongs to the Thz kinase family. Requires Mg(2+) as cofactor.

The enzyme catalyses 5-(2-hydroxyethyl)-4-methylthiazole + ATP = 4-methyl-5-(2-phosphooxyethyl)-thiazole + ADP + H(+). It functions in the pathway cofactor biosynthesis; thiamine diphosphate biosynthesis; 4-methyl-5-(2-phosphoethyl)-thiazole from 5-(2-hydroxyethyl)-4-methylthiazole: step 1/1. In terms of biological role, catalyzes the phosphorylation of the hydroxyl group of 4-methyl-5-beta-hydroxyethylthiazole (THZ). This is Hydroxyethylthiazole kinase from Shigella boydii serotype 4 (strain Sb227).